Consider the following 262-residue polypeptide: Histone chaperone cia1 (262 aa).

The interval 157–262 is disordered; sequence IQWDNPDFDD…KPEEKPETSQ (106 aa). Coiled coils occupy residues 173 to 196 and 223 to 253; these read DADEEEEEEEADEMEEEFDEEGEG and KGSEEEEEEEIDIEEEEEESALANASAAEEK. 2 stretches are compositionally biased toward acidic residues: residues 173-219 and 226-242; these read DADE…GEGE and EEEEEEEIDIEEEEEES. The segment covering 250-262 has biased composition (basic and acidic residues); the sequence is AEEKPEEKPETSQ.

This sequence belongs to the ASF1 family. In terms of assembly, interacts with histone H3 and histone H4.

The protein resides in the nucleus. Its function is as follows. Histone chaperone that facilitates histone deposition and histone exchange and removal during nucleosome assembly and disassembly. The protein is Histone chaperone cia1 (cia1) of Schizosaccharomyces pombe (strain 972 / ATCC 24843) (Fission yeast).